The following is a 103-amino-acid chain: Antitoxin VapB1 (103 aa).

Its function is as follows. Antitoxin component of a type II toxin-antitoxin (TA) system. Upon expression in E.coli neutralizes the effect of cognate toxin VapC1, partially inhibits the RNase activity of VapC1 in vitro. This chain is Antitoxin VapB1 (vapB1), found in Rickettsia felis (strain ATCC VR-1525 / URRWXCal2) (Rickettsia azadi).